Here is a 281-residue protein sequence, read N- to C-terminus: MTDHRPSPEEEQTTANEERTVSNGRYLYCVVDTTSSESATLSTTGVDDNPVYVVEADGVGAVVHDCETVYETEDLEQVKRWLVTHQQVVDAASDAFGTPLPMRFDTVLEGGDASIERWLEDHYEGFRDELASFAGVWEYRINLLWDSAPFEETIADRDDRLRELRQRQQQSGAGKKFLLEKQSDQRLQELKRERRTELADQLKEAITPVVNDLTEQDTNTPLQDEHSSIEKEQIVRFAVLADEDDETALGDRLDTIVEHEGVEIRFTGPWPPYTFAPDIGK.

It belongs to the gas vesicle GvpF/GvpL family. In terms of assembly, may form oligomers. GvpF to GvpM interact with each other in vitro, and may form multi-subunit complex(es). Interacts with GvpC1, GvpN1 and GvpO1.

It localises to the gas vesicle. It is found in the cytoplasm. Its function is as follows. Proteins GvpF to GvpM might be involved in nucleating gas vesicle formation. A minor component of the gas vesicle. This the only minor gas vesicle protein that binds all the others (including GvpC1, GvpN1 and GvpO1, but not GvpA1), suggesting it might be able to assemble them. Gas vesicles are hollow, gas filled proteinaceous nanostructures found in several microbial planktonic microorganisms. They allow positioning of halobacteria at the optimal depth for growth in the poorly aerated, shallow brine pools of their habitat. In terms of biological role, expression of a 9.5 kb p-vac DNA fragment containing 2 divergently transcribed regions (gvpD-gvpE-gvpF-gvpG-gvpH-gvpI-gvpJ-gvpK-gvpL-gvpM and gvpA-gvpC-gvpN-gvpO) allows H.volcanii to produce gas vesicles. A minimal gas vesicle can be made in H.volcanii by gvpA1-gvpO1 plus gvpF1-gvpG1-gvpJ1-gvpK1-gvpL1-gvpM1; lack of enough GvpJ1 prevents their formation. A similar region restores gas vesicle production in H.halobium without the p-vac locus, but it still has the c-vac locus. The protein is Gas vesicle protein L1 (gvpL11) of Halobacterium salinarum (strain ATCC 700922 / JCM 11081 / NRC-1) (Halobacterium halobium).